Here is a 449-residue protein sequence, read N- to C-terminus: Tubulin alpha-B chain (449 aa).

GTP contacts are provided by Gln11, Glu71, Ser140, Gly144, Thr145, Thr179, Asn206, and Asn228. Glu71 contributes to the Mg(2+) binding site. Glu254 is a catalytic residue.

Belongs to the tubulin family. As to quaternary structure, dimer of alpha and beta chains. A typical microtubule is a hollow water-filled tube with an outer diameter of 25 nm and an inner diameter of 15 nM. Alpha-beta heterodimers associate head-to-tail to form protofilaments running lengthwise along the microtubule wall with the beta-tubulin subunit facing the microtubule plus end conferring a structural polarity. Microtubules usually have 13 protofilaments but different protofilament numbers can be found in some organisms and specialized cells. The cofactor is Mg(2+).

It localises to the cytoplasm. The protein localises to the cytoskeleton. The enzyme catalyses GTP + H2O = GDP + phosphate + H(+). Functionally, tubulin is the major constituent of microtubules, a cylinder consisting of laterally associated linear protofilaments composed of alpha- and beta-tubulin heterodimers. Microtubules grow by the addition of GTP-tubulin dimers to the microtubule end, where a stabilizing cap forms. Below the cap, tubulin dimers are in GDP-bound state, owing to GTPase activity of alpha-tubulin. This Neurospora crassa (strain ATCC 24698 / 74-OR23-1A / CBS 708.71 / DSM 1257 / FGSC 987) protein is Tubulin alpha-B chain (tba-2).